The sequence spans 429 residues: Oxysterol-binding protein-like protein OBPalpha (429 aa).

The protein belongs to the OSBP family.

In Candida albicans (strain SC5314 / ATCC MYA-2876) (Yeast), this protein is Oxysterol-binding protein-like protein OBPalpha (OBPALPHA).